The following is a 117-amino-acid chain: MSAGSSCSQTPSRAIPTRRVALGDGVQLPPGDYSTTPGGTLFSTTPGGTRIIYDRKFLMECRNSPVAKTPPKDLPAIPGVTSPTSDEPPMQASQSQLPSSPEDKRAGGEESQFEMDI.

2 stretches are compositionally biased toward polar residues: residues 1–12 and 33–47; these read MSAGSSCSQTPS and YSTT…TTPG. Residues 1 to 47 are disordered; that stretch reads MSAGSSCSQTPSRAIPTRRVALGDGVQLPPGDYSTTPGGTLFSTTPG. Serine 2 carries the post-translational modification N-acetylserine. A phosphothreonine mark is found at threonine 36 and threonine 40. Serine 43 is modified (phosphoserine). A phosphothreonine mark is found at threonine 45 and threonine 49. A Phosphotyrosine modification is found at tyrosine 53. Residues 53-59 carry the YXXXXLphi motif motif; that stretch reads YDRKFLM. A Glycyl lysine isopeptide (Lys-Gly) (interchain with G-Cter in ubiquitin) cross-link involves residue lysine 56. Serine 64 bears the Phosphoserine mark. The disordered stretch occupies residues 64 to 117; that stretch reads SPVAKTPPKDLPAIPGVTSPTSDEPPMQASQSQLPSSPEDKRAGGEESQFEMDI. Threonine 69 is modified (phosphothreonine). Residues 81-99 are compositionally biased toward polar residues; it reads TSPTSDEPPMQASQSQLPS. A phosphoserine mark is found at serine 82, serine 95, serine 99, serine 100, and serine 111. A TOS motif motif is present at residues 113–117; the sequence is FEMDI.

The protein belongs to the eIF4E-binding protein family. Hypophosphorylated EIF4EBP1 competes with EIF4G1/EIF4G3 to interact with EIF4E; insulin stimulated MAP-kinase (MAPK1 and MAPK3) or mTORC1 phosphorylation of EIF4EBP1 causes dissociation of the complex allowing EIF4G1/EIF4G3 to bind and consequent initiation of translation. Interacts (via TOS motif) with RPTOR; promoting phosphorylation by mTORC1. In terms of processing, phosphorylated on serine and threonine residues in response to insulin, EGF and PDGF. Phosphorylation at Thr-36, Thr-45, Ser-64 and Thr-69, corresponding to the hyperphosphorylated form, is regulated by mTORC1 and abolishes binding to EIF4E. Ubiquitinated: when eIF4E levels are low, hypophosphorylated form is ubiquitinated by the BCR(KLHL25) complex, leading to its degradation and serving as a homeostatic mechanism to maintain translation and prevent eIF4E inhibition when eIF4E levels are low. Not ubiquitinated when hyperphosphorylated (at Thr-36, Thr-45, Ser-64 and Thr-69) or associated with eIF4E. In terms of tissue distribution, highest expression in fat cells.

Its subcellular location is the cytoplasm. It is found in the nucleus. Its function is as follows. Repressor of translation initiation that regulates EIF4E activity by preventing its assembly into the eIF4F complex: hypophosphorylated form competes with EIF4G1/EIF4G3 and strongly binds to EIF4E, leading to repress translation. In contrast, hyperphosphorylated form dissociates from EIF4E, allowing interaction between EIF4G1/EIF4G3 and EIF4E, leading to initiation of translation. Mediates the regulation of protein translation by hormones, growth factors and other stimuli that signal through the MAP kinase and mTORC1 pathways. The chain is Eukaryotic translation initiation factor 4E-binding protein 1 (Eif4ebp1) from Mus musculus (Mouse).